The following is a 265-amino-acid chain: Undecaprenyl-diphosphatase (265 aa).

A run of 7 helical transmembrane segments spans residues 38-58 (RSDF…CLAL), 75-95 (RDYV…GLIV), 108-128 (PVAW…HFAG), 135-155 (VVTW…GVFP), 181-201 (FVFM…LLEM), 215-235 (VAVA…WLLG), and 244-264 (VFAV…PAAA).

Belongs to the UppP family.

Its subcellular location is the cell inner membrane. It catalyses the reaction di-trans,octa-cis-undecaprenyl diphosphate + H2O = di-trans,octa-cis-undecaprenyl phosphate + phosphate + H(+). Catalyzes the dephosphorylation of undecaprenyl diphosphate (UPP). Confers resistance to bacitracin. This Xanthomonas euvesicatoria pv. vesicatoria (strain 85-10) (Xanthomonas campestris pv. vesicatoria) protein is Undecaprenyl-diphosphatase.